Consider the following 381-residue polypeptide: Ribosome assembly 1 protein (381 aa).

At M1 the chain carries N-acetylmethionine. Disordered stretches follow at residues 1-38, 164-216, and 350-381; these read MNYNNFENSKGDGHSRLPKPTYSGTLSDGYDESKIKRQ, KDTF…DRDE, and FGSSEDNNKNHYKPNYKNRKPNLSRANFTRNK. S172 is modified (phosphoserine). Residues 359-371 are compositionally biased toward basic residues; it reads NHYKPNYKNRKPN.

It localises to the nucleus. Its function is as follows. Involved in a late nucleoplasmic step of 60S ribosomal subunit assembly. This Saccharomyces cerevisiae (strain ATCC 204508 / S288c) (Baker's yeast) protein is Ribosome assembly 1 protein (RSA1).